The following is a 394-amino-acid chain: Seipin (394 aa).

Residues 1–27 (MVNDPPVPALLWAQEMGHVMAGRARKL) are Cytoplasmic-facing. The chain crosses the membrane as a helical span at residues 28–48 (LLQFGVFFCTILLLLWVSVFL). Residues 49 to 242 (YGSFYYSYMP…TCAFVGVASN (194 aa)) lie on the Lumenal side of the membrane. Residues Asn-88 and Asn-242 are each glycosylated (N-linked (GlcNAc...) asparagine). The helical transmembrane segment at 243 to 263 (FTFLSVIVLFSYMQWVWGGIW) threads the bilayer. Residues 264-394 (PRQRLSLQVN…VRQRPICSSS (131 aa)) are Cytoplasmic-facing. Residues 281–394 (RKDIQRKVSA…VRQRPICSSS (114 aa)) are disordered. Phosphoserine is present on Ser-289. The segment covering 292 to 303 (QPGPQGQEESPQ) has biased composition (low complexity). 2 positions are modified to phosphoserine: Ser-346 and Ser-351.

The protein belongs to the seipin family. As to quaternary structure, undecamer (an oligomer having eleven subunits). Oligomerization is important for its function in lipid droplet formation. Interacts with LDAF1 to form an oligomeric complex. Interacts with RAB18. Interacts with ZFYVE1 in a RAB18-dependent manner.

The protein resides in the endoplasmic reticulum membrane. It is found in the lipid droplet. Its function is as follows. Plays a crucial role in the formation of lipid droplets (LDs) which are storage organelles at the center of lipid and energy homeostasis. In association with LDAF1, defines the sites of LD formation in the ER. Also required for growth and maturation of small nascent LDs into larger mature LDs. Mediates the formation and/or stabilization of endoplasmic reticulum-lipid droplets (ER-LD) contacts, facilitating protein and lipid delivery from the ER into growing LDs. Regulates the maturation of ZFYVE1-positive nascent LDs and the function of the RAB18-ZFYVE1 complex in mediating the formation of ER-LD contacts. Binds anionic phospholipids including phosphatidic acid. Plays an important role in the differentiation and development of adipocytes. This chain is Seipin, found in Bos taurus (Bovine).